The chain runs to 124 residues: Small ribosomal subunit protein uS12 (124 aa).

Residue aspartate 89 is modified to 3-methylthioaspartic acid. The interval 104-124 (LQGVKDRKQSRSKYGAKRPKK) is disordered. Residues 113 to 124 (SRSKYGAKRPKK) are compositionally biased toward basic residues.

The protein belongs to the universal ribosomal protein uS12 family. As to quaternary structure, part of the 30S ribosomal subunit. Contacts proteins S8 and S17. May interact with IF1 in the 30S initiation complex.

In terms of biological role, with S4 and S5 plays an important role in translational accuracy. Interacts with and stabilizes bases of the 16S rRNA that are involved in tRNA selection in the A site and with the mRNA backbone. Located at the interface of the 30S and 50S subunits, it traverses the body of the 30S subunit contacting proteins on the other side and probably holding the rRNA structure together. The combined cluster of proteins S8, S12 and S17 appears to hold together the shoulder and platform of the 30S subunit. The protein is Small ribosomal subunit protein uS12 of Thiomonas delicata (Thiomonas cuprina).